The following is a 652-amino-acid chain: Na(+)/H(+) antiporter NhaA 3 (652 aa).

Residues 1–428 (MTGEIPRGRR…GASLTTWLVF (428 aa)) form a na(+)/H(+) antiporter NhaA region. The next 11 membrane-spanning stretches (helical) occupy residues 32-52 (ETGS…WVNL), 78-98 (LRFW…GLEV), 114-134 (MLPL…YLAF), 142-162 (VGWG…LAVL), 173-193 (FLLT…AIAY), 200-220 (MALF…AAGV), 227-249 (LLLG…VVGL), 306-326 (HPWA…GVVV), 342-362 (GVLF…SMLV), 376-396 (WAAI…ALLI), and 411-431 (VGIL…FRLA). The Thioredoxin domain maps to 429 to 623 (RLAARLAPAR…LSAAVMSAFA (195 aa)). The tract at residues 626 to 652 (RLRPEGGREPDHRSEAGSEQPDEEPGT) is disordered. Residues 627–641 (LRPEGGREPDHRSEA) are compositionally biased toward basic and acidic residues.

It in the N-terminal section; belongs to the NhaA Na(+)/H(+) (TC 2.A.33) antiporter family.

The protein localises to the cell membrane. It catalyses the reaction Na(+)(in) + 2 H(+)(out) = Na(+)(out) + 2 H(+)(in). In terms of biological role, na(+)/H(+) antiporter that extrudes sodium in exchange for external protons. The sequence is that of Na(+)/H(+) antiporter NhaA 3 from Salinispora tropica (strain ATCC BAA-916 / DSM 44818 / JCM 13857 / NBRC 105044 / CNB-440).